The sequence spans 70 residues: Large ribosomal subunit protein eL38 (70 aa).

It belongs to the eukaryotic ribosomal protein eL38 family.

This is Large ribosomal subunit protein eL38 (RpL38) from Plutella xylostella (Diamondback moth).